A 430-amino-acid polypeptide reads, in one-letter code: UPF0597 protein CV_1824 (430 aa).

Belongs to the UPF0597 family.

The sequence is that of UPF0597 protein CV_1824 from Chromobacterium violaceum (strain ATCC 12472 / DSM 30191 / JCM 1249 / CCUG 213 / NBRC 12614 / NCIMB 9131 / NCTC 9757 / MK).